Reading from the N-terminus, the 336-residue chain is USG-1 protein homolog (336 aa).

It belongs to the aspartate-semialdehyde dehydrogenase family.

This Azotobacter vinelandii protein is USG-1 protein homolog (usg).